Reading from the N-terminus, the 585-residue chain is Voltage-gated potassium channel KCNC1 (585 aa).

At 1 to 190 (MGQGDESERI…EDPYSSRYAR (190 aa)) the chain is on the cytoplasmic side. Position 44 is a phosphoserine (Ser-44). Residues His-77, Cys-83, Cys-104, and Cys-105 each coordinate Zn(2+). The tract at residues 121-147 (SFGGAPLDNSADDADADGPGDSGDGED) is disordered. A phosphoserine mark is found at Ser-130, Ser-142, Ser-158, and Ser-160. Over residues 130-147 (SADDADADGPGDSGDGED) the composition is skewed to acidic residues. The helical transmembrane segment at 191–209 (YVAFASLFFILVSITTFCL) threads the bilayer. N-linked (GlcNAc...) asparagine glycans are attached at residues Asn-220 and Asn-229. A helical membrane pass occupies residues 248-267 (IEGVCVVWFTFEFLMRVVFC). Residues 268-276 (PNKVEFIKN) are Cytoplasmic-facing. Residues 277-295 (SLNIIDFVAILPFYLEVGL) form a helical membrane-spanning segment. A helical; Voltage-sensor transmembrane segment spans residues 309 to 331 (FLRVVRFVRILRIFKLTRHFVGL). Over 332 to 344 (RVLGHTLRASTNE) the chain is Cytoplasmic. Residues 345–366 (FLLLIIFLALGVLIFATMIYYA) traverse the membrane as a helical segment. K(+) contacts are provided by Thr-400, Leu-401, Gly-402, and Tyr-403. The Selectivity filter signature appears at 400–405 (TLGYGD). The helical transmembrane segment at 415–436 (LVGALCALAGVLTIAMPVPVIV) threads the bilayer. The Cytoplasmic segment spans residues 437 to 585 (NNFGMYYSLA…YMPTEAVRVT (149 aa)). Residue Ser-474 is modified to Phosphoserine. Thr-483 carries the post-translational modification Phosphothreonine.

Belongs to the potassium channel family. C (Shaw) (TC 1.A.1.2) subfamily. Kv3.1/KCNC1 sub-subfamily. In terms of assembly, homotetramer. Homomultimer. Heteromultimer with KCNG3, KCNG4 and KCNV2. Heteromultimer with KCNC2. Heterotetramer with KCNC3. Interacts with the ancillary subunits KCNE1 and KCNE2; the interaction modulates channel activity. Post-translationally, N-glycosylated; contains sialylated glycans. Expressed in brain. Expressed in globus pallidal neurons of the basal ganglia (at protein level). Detected on Purkinje cells in the cerebellum molecular layer (at protein level).

The protein localises to the cell membrane. It is found in the cell projection. Its subcellular location is the axon. The protein resides in the presynaptic cell membrane. The catalysed reaction is K(+)(in) = K(+)(out). Voltage-gated potassium channel that opens in response to the voltage difference across the membrane and through which potassium ions pass in accordance with their electrochemical gradient. The mechanism is time-dependent and inactivation is slow. Plays an important role in the rapid repolarization of fast-firing brain neurons. Can form functional homotetrameric channels and heterotetrameric channels that contain variable proportions of KCNC2, and possibly other family members as well. Contributes to fire sustained trains of very brief action potentials at high frequency in pallidal neurons. The sequence is that of Voltage-gated potassium channel KCNC1 from Rattus norvegicus (Rat).